The primary structure comprises 417 residues: Phosphoglycerate kinase 1 (417 aa).

Ser2 carries the N-acetylserine modification. Phosphoserine is present on residues Ser2 and Ser4. Residues 2–186 are globular domain-1; sequence SLSNKLTLDK…VGVNLPQKAG (185 aa). Lys6 is modified (N6-succinyllysine). The residue at position 11 (Lys11) is an N6-acetyllysine. The (2R)-3-phosphoglycerate site is built by Val23, Asp24, Phe25, Asn26, Gln38, and Arg39. The mitochondrial targeting region exposed following cis-trans isomerization by PIN1 and recognized by the TOM complex for mitochondrial translocation of the protein stretch occupies residues 38-43; that stretch reads QRIKAA. Lys48 bears the N6-acetyllysine; alternate mark. Lys48 carries the post-translational modification N6-succinyllysine; alternate. (2R)-3-phosphoglycerate is bound by residues Ser62, His63, Gly65, and Arg66. Lys75 carries the post-translational modification N6-acetyllysine. Tyr76 bears the Phosphotyrosine mark. Residues Lys86 and Lys91 each carry the N6-acetyllysine modification. Residue Lys97 is modified to N6-acetyllysine; alternate. Lys97 carries the post-translational modification N6-(2-hydroxyisobutyryl)lysine; alternate. Residues Leu122 and Arg123 each contribute to the (2R)-3-phosphoglycerate site. At Lys131 the chain carries N6-acetyllysine; alternate. Position 131 is an N6-malonyllysine; alternate (Lys131). Lys146 carries the post-translational modification N6-acetyllysine. Positions 170 and 171 each coordinate (2R)-3-phosphoglycerate. A linker region spans residues 187–190; it reads GFLM. Lys191 bears the N6-succinyllysine mark. The globular domain-2 stretch occupies residues 191 to 417; sequence KKELNYFAKA…LPGVDALSNV (227 aa). Tyr196 carries the post-translational modification Phosphotyrosine. Lys199 bears the N6-acetyllysine mark. Ser203 is modified (phosphoserine). Gly214 contributes to the ADP binding site. Residue Gly214 participates in CDP binding. Residues Ala215 and Lys216 each coordinate AMP. An ATP-binding site is contributed by Ala215. Ala215 provides a ligand contact to Mg(2+). An N6-(2-hydroxyisobutyryl)lysine modification is found at Lys216. 2 residues coordinate Mg(2+): Ala218 and Asp219. Asp219 serves as a coordination point for CDP. Lys220 lines the AMP pocket. An ATP-binding site is contributed by Lys220. The residue at position 220 (Lys220) is an N6-(2-hydroxyisobutyryl)lysine. Gly238 lines the ADP pocket. Position 238 (Gly238) interacts with CDP. An AMP-binding site is contributed by Gly239. Gly239 contacts ATP. 2 positions are modified to N6-acetyllysine: Lys267 and Lys291. Gly313 lines the AMP pocket. Gly313 is an ATP binding site. The residue at position 323 (Lys323) is an N6-(2-hydroxyisobutyryl)lysine. CDP contacts are provided by Gly338, Val340, and Phe343. Phe343 is an ADP binding site. An AMP-binding site is contributed by Glu344. Glu344 is an ATP binding site. Lys361 carries the post-translational modification N6-acetyllysine. Positions 375 and 376 each coordinate ATP. Asp375 is a binding site for Mg(2+). The segment at 406-417 is associated with globular domain 1; the sequence is KVLPGVDALSNV.

It belongs to the phosphoglycerate kinase family. In terms of assembly, monomer. Interacts with kinase MAPK1/ERK2; the interaction is direct, occurs under hypoxic conditions, and promotes its interaction with PIN1. Interacts with peptidyl-prolyl cis-trans isomerase PIN1; the interaction is direct, occurs under hypoxic conditions, and targets the protein to the mitochondrion by promoting interactions with the TOM complex. Interacts with mitochondrial circRNA mcPGK1 (via its 2nd stem-loop); the interaction is direct and targets the protein to the mitochondrion by promoting interactions with the TOM complex. Interacts with pyruvate dehydrogenase kinase PDK1; the interaction is direct, occurs under hypoxic conditions and leads to PDK1-mediated inhibition of pyruvate dehydrogenase complex activity. Mg(2+) serves as cofactor. Post-translationally, phosphorylated at Ser-203 by MAPK1/ERK2 under hypoxic conditions, which promotes its mitochondrial targeting.

It is found in the cytoplasm. The protein resides in the cytosol. Its subcellular location is the mitochondrion matrix. It carries out the reaction (2R)-3-phosphoglycerate + ATP = (2R)-3-phospho-glyceroyl phosphate + ADP. The catalysed reaction is L-seryl-[protein] + ATP = O-phospho-L-seryl-[protein] + ADP + H(+). The protein operates within carbohydrate degradation; glycolysis; pyruvate from D-glyceraldehyde 3-phosphate: step 2/5. Its function is as follows. Catalyzes one of the two ATP producing reactions in the glycolytic pathway via the reversible conversion of 1,3-diphosphoglycerate to 3-phosphoglycerate. Both L- and D- forms of purine and pyrimidine nucleotides can be used as substrates, but the activity is much lower on pyrimidines. In addition to its role as a glycolytic enzyme, it seems that PGK-1 acts as a polymerase alpha cofactor protein (primer recognition protein). Acts as a protein kinase when localized to the mitochondrion where it phosphorylates pyruvate dehydrogenase kinase PDK1 to inhibit pyruvate dehydrogenase complex activity and suppress the formation of acetyl-coenzyme A from pyruvate, and consequently inhibit oxidative phosphorylation and promote glycolysis. May play a role in sperm motility. The chain is Phosphoglycerate kinase 1 (PGK1) from Equus caballus (Horse).